The following is a 356-amino-acid chain: uncharacterized protein (356 aa).

A run of 6 helical transmembrane segments spans residues 7-29, 49-71, 91-113, 270-292, 299-316, and 329-348; these read LLSR…VSLY, YFLN…ISLI, ISPL…TFLL, LFYR…YLFF, QVIP…LVIL, and VLYS…KGVY.

It is found in the cell membrane. This is an uncharacterized protein from Aquifex aeolicus (strain VF5).